The chain runs to 183 residues: Mid1-interacting protein 1 (183 aa).

Methionine 1 carries the N-acetylmethionine modification. Serine 75 and serine 79 each carry phosphoserine.

The protein belongs to the SPOT14 family. In terms of assembly, homodimer in the absence of THRSP. Heterodimer with THRSP. The homodimer interacts with ACACA and ACACB. Promotes polymerization of Acetyl-CoA carboxylase to form complexes that contain MID1IP1 and ACACA and/or ACACB. Interaction with THRSP interferes with ACACA binding.

It localises to the nucleus. The protein resides in the cytoplasm. It is found in the cytoskeleton. Plays a role in the regulation of lipogenesis in liver. Up-regulates ACACA enzyme activity. Required for efficient lipid biosynthesis, including triacylglycerol, diacylglycerol and phospholipid. Involved in stabilization of microtubules. The polypeptide is Mid1-interacting protein 1 (MID1IP1) (Homo sapiens (Human)).